A 204-amino-acid polypeptide reads, in one-letter code: Pneumococcal vaccine antigen A (204 aa).

It is found in the cell surface. This is Pneumococcal vaccine antigen A (pvaA) from Streptococcus pneumoniae serotype 4 (strain ATCC BAA-334 / TIGR4).